We begin with the raw amino-acid sequence, 326 residues long: Cathepsin L-like proteinase (326 aa).

The signal sequence occupies residues 1-15; the sequence is MRLFILAVLTVGVLG. Positions 16-106 are cleaved as a propeptide — activation peptide; that stretch reads SNDDLWHQWK…HGVPYEANNR (91 aa). Proline 109 bears the 3-hydroxyproline; partial mark. 3 disulfide bridges follow: cysteine 129/cysteine 172, cysteine 163/cysteine 204, and cysteine 262/cysteine 311. Cysteine 132 is an active-site residue. Proline 196 carries the post-translational modification 3-hydroxyproline; partial. Active-site residues include histidine 269 and asparagine 289.

It belongs to the peptidase C1 family. As to quaternary structure, monomer. Post-translationally, contains cysteine residues involved in intramolecular disulfide bonding.

The protein resides in the secreted. Its activity is regulated as follows. Strongly inhibited by Antipain, E64 and Leupeptin, and weakly inhibited by iodoacetic acid (IAA) and phenylmethylsulfonyl fluoride (PMSF). Requires the presence of dithiothreitol (DTT) for activity. Thiol protease. Probably involved in interaction with host tissues. Displays a similar activity to that of papain. Has high activity on Z-Phe-Arg-NHMec, but no activity on Z-Arg-NHMec. This Fasciola hepatica (Liver fluke) protein is Cathepsin L-like proteinase.